The following is a 371-amino-acid chain: Solute carrier family 35 member F6 (371 aa).

Positions 1–18 (MAWTKYQLFLAGLMLVTG) are cleaved as a signal peptide. A run of 2 helical transmembrane segments spans residues 48–68 (FLQAVGMFLGEFSCLAAFYLL) and 89–109 (LLFLPPALCDMTGTSLMYVAL). The EamA domain occupies 104–160 (LMYVALNMTSASSFQMLRGAVIIFTGLFSVAFLGRRLVLSQWLGILATIAGLVVVGL). N-linked (GlcNAc...) asparagine glycosylation is present at N110. 7 helical membrane passes run 117–137 (FQMLRGAVIIFTGLFSVAFLG), 140–160 (LVLSQWLGILATIAGLVVVGL), 176–196 (VITGDLLIIMAQIIVAIQMVL), 216–236 (GLFGFVILSLLLVPMYYIPAG), 261–281 (LIAVALLGNISSIAFFNFAGI), 295–312 (LDSLRTVVIWALSLALGW), and 317–336 (ALQILGFLILLIGTALYNGL). Residues 352 to 371 (EESEQERLLGGTRTPINDAS) form a disordered region. The residue at position 365 (T365) is a Phosphothreonine.

The protein belongs to the SLC35F solute transporter family. Interacts with SLC25A5. As to expression, expressed in pancreatic ductal adenocarcinoma (PDAC) (at protein level). Strongly expressed in prostate and thyroid. Weakly expressed in lung, heart, liver and kidney.

It localises to the mitochondrion. It is found in the lysosome membrane. In terms of biological role, involved in the maintenance of mitochondrial membrane potential in pancreatic ductal adenocarcinoma (PDAC) cells. Promotes pancreatic ductal adenocarcinoma (PDAC) cell growth. May play a role as a nucleotide-sugar transporter. This is Solute carrier family 35 member F6 (SLC35F6) from Homo sapiens (Human).